Here is a 464-residue protein sequence, read N- to C-terminus: Zinc transporter 6 (464 aa).

At 1-33 (MGTIYLFRKTQRSLLGKLTQEFRLVTADRRSWK) the chain is on the cytoplasmic side. Residues 34–54 (ILLFGAINVVCTGFLLTWCSS) traverse the membrane as a helical segment. Residues 55–64 (TNSMALTAYT) are Extracellular-facing. Residues 65-85 (YLTIFDLFSLITCLISYWVMM) form a helical membrane-spanning segment. Topologically, residues 86-98 (KKPSPTYSFGFER) are cytoplasmic. A helical transmembrane segment spans residues 99 to 119 (FEVLSVFASTVLAQLGALFIL). The Extracellular segment spans residues 120-134 (KESAERFVEQPEIHT). The helical transmembrane segment at 135-155 (GRLLVGTFVALCFNLFSMLSI) threads the bilayer. The Cytoplasmic portion of the chain corresponds to 156–200 (RNKPFAYVSEAASTSWLQEHVADLSRSLCGIIPGLSSIFLPRMNP). Residues 201 to 221 (FVLIDIAGALALCITYMLIEI) form a helical membrane-spanning segment. Topologically, residues 222–228 (NNYFAVD) are extracellular. A helical transmembrane segment spans residues 229–249 (TASAIAIAVMTFGTMYPMSVY). Residues 250–464 (SGKVLLQTTP…TPGQFTQFKQ (215 aa)) are Cytoplasmic-facing.

This sequence belongs to the cation diffusion facilitator (CDF) transporter (TC 2.A.4) family. SLC30A subfamily. In terms of assembly, heterodimer with SLC30A5; form a functional zinc ion transmembrane transporter.

It is found in the golgi apparatus. It localises to the trans-Golgi network membrane. Has probably no intrinsic transporter activity but together with SLC30A5 forms a functional zinc ion:proton antiporter heterodimer, mediating zinc entry into the lumen of organelles along the secretory pathway. As part of that zinc ion:proton antiporter, contributes to zinc ion homeostasis within the early secretory pathway and regulates the activation and folding of enzymes like alkaline phosphatases and enzymes involved in phosphatidylinositol glycan anchor biosynthesis. The protein is Zinc transporter 6 (slc30a6) of Xenopus tropicalis (Western clawed frog).